The primary structure comprises 428 residues: Putative UPF0496 protein 5 (428 aa).

Positions 1-14 are enriched in basic residues; sequence MGNRHGIMRPRRLA. The segment at 1-40 is disordered; sequence MGNRHGIMRPRRLASGRSAAAAEEEGEDGEGEPGSYEAAC. Over residues 22–31 the composition is skewed to acidic residues; sequence AEEEGEDGEG. 2 helical membrane-spanning segments follow: residues 229 to 249 and 252 to 272; these read IVFL…AAIA and PVAA…GKWM.

It belongs to the UPF0496 family.

It localises to the membrane. The protein is Putative UPF0496 protein 5 of Oryza sativa subsp. indica (Rice).